Reading from the N-terminus, the 351-residue chain is tRNA-specific 2-thiouridylase MnmA 2 (351 aa).

Residues 13 to 20 (GMSGGTDS) and Phe-39 contribute to the ATP site. Cys-98 functions as the Nucleophile in the catalytic mechanism. A disulfide bond links Cys-98 and Cys-195. Gly-122 serves as a coordination point for ATP. The interval 144–146 (KDQ) is interaction with tRNA. Catalysis depends on Cys-195, which acts as the Cysteine persulfide intermediate. Residues 301 to 302 (RY) are interaction with tRNA.

It belongs to the MnmA/TRMU family.

The protein localises to the cytoplasm. The enzyme catalyses S-sulfanyl-L-cysteinyl-[protein] + uridine(34) in tRNA + AH2 + ATP = 2-thiouridine(34) in tRNA + L-cysteinyl-[protein] + A + AMP + diphosphate + H(+). In terms of biological role, catalyzes the 2-thiolation of uridine at the wobble position (U34) of tRNA, leading to the formation of s(2)U34. The polypeptide is tRNA-specific 2-thiouridylase MnmA 2 (Phocaeicola vulgatus (strain ATCC 8482 / DSM 1447 / JCM 5826 / CCUG 4940 / NBRC 14291 / NCTC 11154) (Bacteroides vulgatus)).